Here is a 108-residue protein sequence, read N- to C-terminus: ATPase inhibitor, mitochondrial (108 aa).

The N-terminal 25 residues, 1-25 (MAATALAVRSRIGAWSVWAMQSRGF), are a transit peptide targeting the mitochondrion. The interval 25–48 (FSSDTPEGVRSGAGAVRDAGGAFG) is disordered. Residues 26 to 52 (SSDTPEGVRSGAGAVRDAGGAFGKKEQ) form an N-terminal inhibitory region region. The stretch at 69–108 (ALKKHHENEISHHVKEIERLQKEIERHKQSIKKLKNDDDD) forms a coiled coil. An antiparallel alpha-helical coiled coil region region spans residues 74–106 (HENEISHHVKEIERLQKEIERHKQSIKKLKNDD). Lys103 is modified (N6-succinyllysine).

The protein belongs to the ATPase inhibitor family. As to quaternary structure, homodimer; represents the active form and is present at a pH value below 6.5. Homotetramer; represents the inactive form and is present at a pH value above 7.0.

The protein localises to the mitochondrion. Functionally, endogenous F(1)F(o)-ATPase inhibitor limiting ATP depletion when the mitochondrial membrane potential falls below a threshold and the F(1)F(o)-ATP synthase starts hydrolyzing ATP to pump protons out of the mitochondrial matrix. Required to avoid the consumption of cellular ATP when the F(1)F(o)-ATP synthase enzyme acts as an ATP hydrolase. Indirectly acts as a regulator of heme synthesis in erythroid tissues: regulates heme synthesis by modulating the mitochondrial pH and redox potential, allowing FECH to efficiently catalyze the incorporation of iron into protoporphyrin IX to produce heme. The protein is ATPase inhibitor, mitochondrial of Sus scrofa (Pig).